The primary structure comprises 232 residues: Pyridoxine 5'-phosphate synthase (232 aa).

Asn-7 is a 3-amino-2-oxopropyl phosphate binding site. Asp-9 to His-10 contributes to the 1-deoxy-D-xylulose 5-phosphate binding site. A 3-amino-2-oxopropyl phosphate-binding site is contributed by Arg-18. His-43 (proton acceptor) is an active-site residue. 1-deoxy-D-xylulose 5-phosphate contacts are provided by Arg-45 and His-50. Catalysis depends on Glu-69, which acts as the Proton acceptor. Thr-99 provides a ligand contact to 1-deoxy-D-xylulose 5-phosphate. His-185 functions as the Proton donor in the catalytic mechanism. 3-amino-2-oxopropyl phosphate-binding positions include Gly-186 and Gly-207–His-208.

This sequence belongs to the PNP synthase family. Homooctamer; tetramer of dimers.

The protein localises to the cytoplasm. It carries out the reaction 3-amino-2-oxopropyl phosphate + 1-deoxy-D-xylulose 5-phosphate = pyridoxine 5'-phosphate + phosphate + 2 H2O + H(+). It participates in cofactor biosynthesis; pyridoxine 5'-phosphate biosynthesis; pyridoxine 5'-phosphate from D-erythrose 4-phosphate: step 5/5. In terms of biological role, catalyzes the complicated ring closure reaction between the two acyclic compounds 1-deoxy-D-xylulose-5-phosphate (DXP) and 3-amino-2-oxopropyl phosphate (1-amino-acetone-3-phosphate or AAP) to form pyridoxine 5'-phosphate (PNP) and inorganic phosphate. The polypeptide is Pyridoxine 5'-phosphate synthase (Gluconobacter oxydans (strain 621H) (Gluconobacter suboxydans)).